The sequence spans 121 residues: Small ribosomal subunit protein uS13 (121 aa).

Residues 97 to 121 (VRGQRTRTNARTRRGARKTVAGKKK) form a disordered region. The span at 100–121 (QRTRTNARTRRGARKTVAGKKK) shows a compositional bias: basic residues.

The protein belongs to the universal ribosomal protein uS13 family. As to quaternary structure, part of the 30S ribosomal subunit. Forms a loose heterodimer with protein S19. Forms two bridges to the 50S subunit in the 70S ribosome.

Its function is as follows. Located at the top of the head of the 30S subunit, it contacts several helices of the 16S rRNA. In the 70S ribosome it contacts the 23S rRNA (bridge B1a) and protein L5 of the 50S subunit (bridge B1b), connecting the 2 subunits; these bridges are implicated in subunit movement. Contacts the tRNAs in the A and P-sites. The polypeptide is Small ribosomal subunit protein uS13 (Prochlorococcus marinus (strain MIT 9303)).